Consider the following 587-residue polypeptide: Estrogen receptor (587 aa).

The interval 1 to 176 (MTLHTKTSGV…SMESTKETRY (176 aa)) is modulating (transactivation AF-1). 2 NR C4-type zinc fingers span residues 177 to 197 (CAVCNDYASGYHYGVWSCEGC) and 213 to 237 (CPATNQCTIDKNRRKSCQACRLRKC). The segment at residues 177-242 (CAVCNDYASG…RLRKCYEVGM (66 aa)) is a DNA-binding region (nuclear receptor). The interval 243-302 (MKGGIRKDRRGGRVMKQKRQREEQDSRNGEASSTELRAPTLWASPLVVKHNKKNSPALSL) is hinge. Residues 248-277 (RKDRRGGRVMKQKRQREEQDSRNGEASSTE) are disordered. Residues 249 to 261 (KDRRGGRVMKQKR) show a composition bias toward basic residues. In terms of domain architecture, NR LBD spans 303-539 (TAEQMVSALL…DLLLEMLDAH (237 aa)). A transactivation AF-2 region spans residues 303–587 (TAEQMVSALL…KEEENMQNTL (285 aa)).

This sequence belongs to the nuclear hormone receptor family. NR3 subfamily. Binds DNA as a homodimer. Can form a heterodimer with ER-beta.

The protein localises to the nucleus. The steroid hormones and their receptors are involved in the regulation of eukaryotic gene expression and affect cellular proliferation and differentiation in target tissues. The chain is Estrogen receptor (ESR1) from Taeniopygia guttata (Zebra finch).